Consider the following 76-residue polypeptide: Brevinin-2ISb (76 aa).

Residues 1-22 (MFTMKKSLLVLFFLGTISLSLC) form the signal peptide. The propeptide at 23 to 41 (QEERNADEEDGGEATEEEV) is removed in mature form. C70 and C76 are joined by a disulfide.

Expressed by the skin glands.

It is found in the secreted. Has antimicrobial activity against Gram-negative bacterium E.coli ATCC 8739 (MIC=12.5 ug), against Gram positive bacteria S.aureus ATCC 6538 (MIC=6.3 ug) and B.subtilis ATCC 6633 (MIC=25 ug). Has no activity against methicillin-resistant S.aureus ATCC 43300 (MIC= ug) and fungus C.albicans ATCC 90028. The chain is Brevinin-2ISb from Odorrana ishikawae (Ishikawa's frog).